A 432-amino-acid polypeptide reads, in one-letter code: MKKIASFCSAAVLIASSFLLNNTVQAQQILDRVVVVVDDGVVLQSQIDQLIQQVKNGQNFNSSNAPSDEVLETQAIERLILQEIQLQMANRMGIEIDDNQLEQAINEIANNQDLTTAELRENMVSSGMSWAAYRENIRNELVIQQVQRAAVQQRVSITPQEINNLVKLIESNQEVQTEYRLAQILISADSNSSQAELEKAKERANTVLNLLDKGSDFADLAVRSSSGSAALDGGDLGWMTVNGMPTLFAEAVDGKSVGDVVGPIRSGIGFHILKVQDKRGEQTVEVQEVKARHILIKPSVILSDNKAKEMLNKYREQIASGEKTFAELAREHSADPGSASRGGDLGWARPNKYAPEFKQKVESIEQDTISEPFSTQFGWHIVEVTGRRTLDATEENKQERAYQMLFSRKFREELDNWQQEIRDQAFIRRVAE.

The signal sequence occupies residues 1–26; the sequence is MKKIASFCSAAVLIASSFLLNNTVQA. 2 consecutive PpiC domains span residues 176 to 277 and 286 to 386; these read QTEY…KVQD and VQEV…EVTG.

The protein resides in the periplasm. It catalyses the reaction [protein]-peptidylproline (omega=180) = [protein]-peptidylproline (omega=0). Its function is as follows. Chaperone involved in the correct folding and assembly of outer membrane proteins. Recognizes specific patterns of aromatic residues and the orientation of their side chains, which are found more frequently in integral outer membrane proteins. May act in both early periplasmic and late outer membrane-associated steps of protein maturation. The chain is Chaperone SurA from Idiomarina loihiensis (strain ATCC BAA-735 / DSM 15497 / L2-TR).